The chain runs to 1666 residues: MATDGASCEPDFARAPEDAAGAPAEAARKEFDVDTLSKSELRMLLSVMEGELEARDLVIEALRARRKEVFIQERYGRFNLNDPFLALQRDYEAGAGDKEKKPVCTNPLSILEAVMAHCRKMQERMSTQLAAAESRQKKLEMEKLQLQTLEQEHKTLAARLEEERVKNKHVVLMLVKECKQLSGKVIEEAQKVEEALAQLEEEKKRASGLEEELSGEKRRSAEMEAQMEKQLSEFDTEREQLRAKLSREEAHTTDLKGEIDKMKKMTEQLKRGNDSKPSLSLPRKAKDRRWVSVSVGTEGPGTGSVACQTDLGVESTDHVKKLPLTVPAKPAAGSPLVAASAKGSGGATAPLARPGVDRQASHADLIVSSPPTIPPPNTNKIEENGPSTSSGPDTPSSTAPLPSNAAPPAIQTPNAAAQNYPAQAPSTHTVHSPCANAALHPALTPRVQAVRFRFQGNANNDQDQNGNNTQSPPSRDVSPTSRDNLVAKQLARNTVTQALSRFTSPQAGAPPRPGAPPTGEGSTHPPVGRTSLKTPGAARVDRGNPPPIPPKKPGLSQTPSPPHPQLKVLLDSSRASNAGPKVDHKTVALPPTSVPQGNRVINEESLPKSSSPQLPPKPSIDLTVAPAGCAVSALATSQVGAWRAETPGLKPPACSDRPLVIPTTIAFRCPINPVSASSCRPGASDSLLVTASGWSPSLTPLLMSGGPAPLAGRPTLLQQAAAQGNVTLLSMLLNEEGLDINHSCEDGHSALYSAAKNGHTDCVRLLLNAEAQVNAADNDGFTPVCAAAAQGHVKCVELLVAYHANINHAAAEGQTPLYLACKNGNKECIKLLLEAGTDRSVKTRDGWTPVHAAVDTGSVDGLKLLLYHRAPACGDGLDTEASRLGVFDLDEGEANPESTPTPVIPADLINHANREGWTAAHIAASKGFKNCLKILCRHGGLEPERKDKCNRTVHDVATDDCKHLLENWNALKIPLRISVGETQGDNSGPDEFESEHTICALNIRKPTSWDDFSKAVSQALTSHFQAISSDGWWSLEDVTLNSPAEASIGLSATSVLSITLGNVPWSVGQSFTQSPWDFLRKHQAEQVTVLLSGPQEGCLSSVTYASMIPLPVLQNYLRLVEQYHTVIFHGPEGSLQDYIALQLALCMKHRQAAVGFSCDIVRADVDAGFSKEQLVDLFIKSACLIPAKQSPASKKTIIILENLERASLSELLGDFLAPLENRSPESPYTFHKGNGTSECYYFHENCFLVGTIAKACLQGPDLLVQQHFRWVQLRWDGEPMQGLLQRFLRRKVVNKFRGKLPSPGEPVCKMVDWALSVWRQLNSCLSHLGTPEALLGPKCFLSCPVVPGHAQATVKWMSKLWNAVIAPRVQDAILSRASVNRQPGLGQTAAKKHPSPGQQAVVKAALSILLHKAVLHGCPLPRAELDQSMADFKGGSFPLSLVSSYSSCSKKKGENGAWRKVSTSPRKKSGWFFSPTWSKPDLSDEGIKSKTISQPNCNRNASLSRQKCLENDLSLALNLDQRLSLGSDDEADLVKELQSMCSSKSESDISKIADTRDDLRRFDSSRNRPAPSATVTNPRMPVSQKEVSPLSSHQTMERSNRTLKTELGVSRVKSFLPVPRSKITQCSQNTKRSSSSSNTRQIEINNNSKDEIWNLRNNEQIEKPNQ.

Disordered regions lie at residues 1–25, 202–224, 366–411, 457–481, and 501–619; these read MATD…APAE, EKKR…AEME, IVSS…PAIQ, NANN…SPTS, and RFTS…PKPS. Positions 120–274 form a coiled coil; it reads KMQERMSTQL…MTEQLKRGND (155 aa). Low complexity-rich tracts occupy residues 385–398 and 457–468; these read GPST…PSST and NANNDQDQNGNN. A compositionally biased stretch (polar residues) spans 469–481; it reads TQSPPSRDVSPTS. Arg-501 is modified (asymmetric dimethylarginine). 6 ANK repeats span residues 712 to 742, 746 to 775, 779 to 808, 812 to 841, 845 to 874, and 915 to 945; these read GRPT…DINH, DGHS…QVNA, DGFT…NINH, EGQT…DRSV, DGWT…PACG, and EGWT…EPER. The residue at position 1527 (Ser-1527) is a Phosphoserine. Residues 1545 to 1566 show a composition bias toward basic and acidic residues; the sequence is SESDISKIADTRDDLRRFDSSR. Disordered regions lie at residues 1545–1601 and 1620–1666; these read SESD…RSNR and RSKI…KPNQ. Polar residues predominate over residues 1585–1594; the sequence is KEVSPLSSHQ. Residues 1627 to 1641 show a composition bias toward low complexity; it reads SQNTKRSSSSSNTRQ. The segment covering 1648-1666 has biased composition (basic and acidic residues); sequence SKDEIWNLRNNEQIEKPNQ.

In terms of assembly, interacts with CTTN/cortactin SH3 domain. Interacts with STRN, STRN4/zinedin and MOB4/phocein; this interactions mediate the association with the STRIPAK core complex and may regulate dendritic spine distribution of the STRIPAK complex in hippocampal neurons. Activation of glutamate receptors weakens the interaction with STRN and STRN4.

The protein localises to the cytoplasm. It localises to the cell cortex. It is found in the cell projection. Its subcellular location is the dendritic spine. Functionally, regulates the dendritic spine distribution of CTTN/cortactin in hippocampal neurons, and thus controls dendritic spinogenesis and dendritic spine maintenance. Associates with the striatin-interacting phosphatase and kinase (STRIPAK) core complex to regulate dendritic spine distribution of the STRIPAK complex in hippocampal neurons. The sequence is that of Cortactin-binding protein 2 (CTTNBP2) from Echinops telfairi (Lesser hedgehog tenrec).